Here is a 352-residue protein sequence, read N- to C-terminus: MKKIVFTGGGSAGHVTPNLAIIPYLKEDNWDISYIGSHQGIEKTIIEKEDIPYYSIASGKLRRYFDLKNIKDPFLVMKGVMDAYVRIRKLKPDVIFSKGGFVSVPVVIGGWLNRVPVLLHESDMTPGLANKIALRFASKIFVTFEEAAKHLPKEKVIYTGSPVREEVLKGNREKALAFLGFSRKKPVITIMGGSLGAKKINETVREALPELLRKYQIVHLCGKGNLDDSLQNKEGYRQFEYVHGELPDILAITDFVISRAGSNAIFEFLTLQKPMLLIPLSKFASRGDQILNAESFERQGYASVLYEEDVTVNSLIKHVEELSHNNEAYNTALKKYNGKEAIQTIIHHISEA.

Residues S11–G13, R164, S194, and Q289 each bind UDP-N-acetyl-alpha-D-glucosamine.

The protein belongs to the glycosyltransferase 28 family. MurG subfamily.

It localises to the cell membrane. It catalyses the reaction di-trans,octa-cis-undecaprenyl diphospho-N-acetyl-alpha-D-muramoyl-L-alanyl-D-glutamyl-meso-2,6-diaminopimeloyl-D-alanyl-D-alanine + UDP-N-acetyl-alpha-D-glucosamine = di-trans,octa-cis-undecaprenyl diphospho-[N-acetyl-alpha-D-glucosaminyl-(1-&gt;4)]-N-acetyl-alpha-D-muramoyl-L-alanyl-D-glutamyl-meso-2,6-diaminopimeloyl-D-alanyl-D-alanine + UDP + H(+). Its pathway is cell wall biogenesis; peptidoglycan biosynthesis. Functionally, cell wall formation. Catalyzes the transfer of a GlcNAc subunit on undecaprenyl-pyrophosphoryl-MurNAc-pentapeptide (lipid intermediate I) to form undecaprenyl-pyrophosphoryl-MurNAc-(pentapeptide)GlcNAc (lipid intermediate II). The chain is UDP-N-acetylglucosamine--N-acetylmuramyl-(pentapeptide) pyrophosphoryl-undecaprenol N-acetylglucosamine transferase 3 from Bacillus thuringiensis (strain Al Hakam).